Reading from the N-terminus, the 436-residue chain is Adenylosuccinate synthetase (436 aa).

Residues 12–18 (GDEGKGK) and 40–42 (GHT) contribute to the GTP site. The active-site Proton acceptor is the aspartate 13. 2 residues coordinate Mg(2+): aspartate 13 and glycine 40. IMP contacts are provided by residues 13-16 (DEGK), 38-41 (NAGH), threonine 128, arginine 142, glutamine 223, threonine 238, and arginine 302. The active-site Proton donor is the histidine 41. 298 to 304 (TTTGRRR) is a binding site for substrate. Residues arginine 304, 330–332 (KLD), and 412–414 (SLG) each bind GTP.

It belongs to the adenylosuccinate synthetase family. Homodimer. Mg(2+) serves as cofactor.

The protein resides in the cytoplasm. The catalysed reaction is IMP + L-aspartate + GTP = N(6)-(1,2-dicarboxyethyl)-AMP + GDP + phosphate + 2 H(+). Its pathway is purine metabolism; AMP biosynthesis via de novo pathway; AMP from IMP: step 1/2. In terms of biological role, plays an important role in the de novo pathway of purine nucleotide biosynthesis. Catalyzes the first committed step in the biosynthesis of AMP from IMP. The protein is Adenylosuccinate synthetase of Prochlorococcus marinus (strain MIT 9301).